A 243-amino-acid chain; its full sequence is GrpE protein homolog, mitochondrial (243 aa).

The interval 42 to 75 (TEASKKEGKEDKAEAQGSQEPETAAETNKEAEGA) is disordered. Basic and acidic residues predominate over residues 44–55 (ASKKEGKEDKAE).

Belongs to the GrpE family. Component of the PAM complex, at least composed of mtHsp70, MGE1, TIM44, PAM16, PAM17 and PAM18.

The protein localises to the mitochondrion matrix. Its function is as follows. Essential component of the PAM complex, a complex required for the translocation of transit peptide-containing proteins from the inner membrane into the mitochondrial matrix in an ATP-dependent manner. Seems to control the nucleotide-dependent binding of SSC1 to substrate proteins. This is GrpE protein homolog, mitochondrial (mge1) from Debaryomyces hansenii (strain ATCC 36239 / CBS 767 / BCRC 21394 / JCM 1990 / NBRC 0083 / IGC 2968) (Yeast).